A 142-amino-acid polypeptide reads, in one-letter code: Large ribosomal subunit protein uL13 (142 aa).

Belongs to the universal ribosomal protein uL13 family. Part of the 50S ribosomal subunit.

Functionally, this protein is one of the early assembly proteins of the 50S ribosomal subunit, although it is not seen to bind rRNA by itself. It is important during the early stages of 50S assembly. The polypeptide is Large ribosomal subunit protein uL13 (Francisella tularensis subsp. mediasiatica (strain FSC147)).